The sequence spans 243 residues: Carboxy-S-adenosyl-L-methionine synthase (243 aa).

S-adenosyl-L-methionine contacts are provided by residues Y40, 65–67 (GSS), 90–91 (DN), 118–119 (DI), N133, and R200.

It belongs to the class I-like SAM-binding methyltransferase superfamily. Cx-SAM synthase family. Homodimer.

It carries out the reaction prephenate + S-adenosyl-L-methionine = carboxy-S-adenosyl-L-methionine + 3-phenylpyruvate + H2O. Its function is as follows. Catalyzes the conversion of S-adenosyl-L-methionine (SAM) to carboxy-S-adenosyl-L-methionine (Cx-SAM). The sequence is that of Carboxy-S-adenosyl-L-methionine synthase from Shewanella frigidimarina (strain NCIMB 400).